Reading from the N-terminus, the 30-residue chain is Bacteriocin SRCAM 37 (30 aa).

The protein belongs to the bacteriocin class IIA/YGNGV family.

The protein resides in the secreted. Functionally, bacteriocin with antibacterial activity against C.jejuni. The sequence is that of Bacteriocin SRCAM 37 from Paenibacillus polymyxa (Bacillus polymyxa).